We begin with the raw amino-acid sequence, 410 residues long: F-box protein At5g36730 (410 aa).

The region spanning 1–46 (MAMSNLPRDLLEEVLSRVPVKSIAAVRSTCKNWNSLTYGQSFTKKL) is the F-box domain.

This Arabidopsis thaliana (Mouse-ear cress) protein is F-box protein At5g36730.